The sequence spans 537 residues: Glucans biosynthesis protein D (537 aa).

A signal peptide (tat-type signal) is located at residues 1–30 (MLMYRRDFLKSVTAAWVAFGLPNPLGGAFA).

Belongs to the OpgD/OpgG family. Post-translationally, predicted to be exported by the Tat system. The position of the signal peptide cleavage has not been experimentally proven.

The protein localises to the periplasm. It functions in the pathway glycan metabolism; osmoregulated periplasmic glucan (OPG) biosynthesis. Its function is as follows. Probably involved in the control of the structural glucose backbone of osmoregulated periplasmic glucans (OPGs). This chain is Glucans biosynthesis protein D, found in Xylella fastidiosa (strain M12).